Reading from the N-terminus, the 365-residue chain is Phospho-N-acetylmuramoyl-pentapeptide-transferase (365 aa).

The next 10 helical transmembrane spans lie at 22–42, 74–94, 95–115, 134–154, 168–188, 201–221, 240–260, 267–287, 292–312, and 342–362; these read YISVRIIMISITSLLITLALG, TMGGVLILSSVIISCLLWGDL, TSIYLWILILVVIFFGAIGFF, KFALQSIFSIVLAIVLFYLLS, SLYIPMGIVIFVVLAFFIING, GLAIVPVVLVAAGLGIYAYIE, LAEVAVFCAAVCGSGLAFLWF, VFMGDVGSLTLGAVLGVIAVM, LIFFIMGLLFVVEALSVMLQV, and KVVIRFWIISLILFLIGLAAI.

It belongs to the glycosyltransferase 4 family. MraY subfamily. Mg(2+) is required as a cofactor.

Its subcellular location is the cell inner membrane. The enzyme catalyses UDP-N-acetyl-alpha-D-muramoyl-L-alanyl-gamma-D-glutamyl-meso-2,6-diaminopimeloyl-D-alanyl-D-alanine + di-trans,octa-cis-undecaprenyl phosphate = di-trans,octa-cis-undecaprenyl diphospho-N-acetyl-alpha-D-muramoyl-L-alanyl-D-glutamyl-meso-2,6-diaminopimeloyl-D-alanyl-D-alanine + UMP. The protein operates within cell wall biogenesis; peptidoglycan biosynthesis. Functionally, catalyzes the initial step of the lipid cycle reactions in the biosynthesis of the cell wall peptidoglycan: transfers peptidoglycan precursor phospho-MurNAc-pentapeptide from UDP-MurNAc-pentapeptide onto the lipid carrier undecaprenyl phosphate, yielding undecaprenyl-pyrophosphoryl-MurNAc-pentapeptide, known as lipid I. In Francisella tularensis subsp. mediasiatica (strain FSC147), this protein is Phospho-N-acetylmuramoyl-pentapeptide-transferase.